The following is a 433-amino-acid chain: Chaperone SurA (433 aa).

Positions 1–20 (MKNWRTLIFGLMFSVSTAFA) are cleaved as a signal peptide. PpiC domains are found at residues 171 to 272 (DTEL…KVND) and 282 to 382 (VTEV…QLLD).

It is found in the periplasm. The catalysed reaction is [protein]-peptidylproline (omega=180) = [protein]-peptidylproline (omega=0). Its function is as follows. Chaperone involved in the correct folding and assembly of outer membrane proteins. Recognizes specific patterns of aromatic residues and the orientation of their side chains, which are found more frequently in integral outer membrane proteins. May act in both early periplasmic and late outer membrane-associated steps of protein maturation. This Photorhabdus laumondii subsp. laumondii (strain DSM 15139 / CIP 105565 / TT01) (Photorhabdus luminescens subsp. laumondii) protein is Chaperone SurA.